Reading from the N-terminus, the 129-residue chain is UPF0325 protein Spro_3794 (129 aa).

The protein belongs to the UPF0325 family.

This Serratia proteamaculans (strain 568) protein is UPF0325 protein Spro_3794.